Reading from the N-terminus, the 318-residue chain is ZAR1-like protein (318 aa).

The tract at residues 149-211 is disordered; it reads LSDPPEAGQP…PVDSSQPLGR (63 aa). A compositionally biased stretch (pro residues) spans 155 to 169; it reads AGQPPPPLPPPSPPP. The segment at 219–304 adopts a 3CxxC-type zinc-finger fold; the sequence is PKYGYFHCKD…QELCGRCKDK (86 aa).

The protein belongs to the ZAR1 family. Interacts with YBX2.

The protein localises to the cytoplasm. It is found in the cytoplasmic ribonucleoprotein granule. Functionally, mRNA-binding protein required for maternal mRNA storage, translation and degradation during oocyte maturation. Probably promotes formation of some phase-separated membraneless compartment that stores maternal mRNAs in oocytes: acts by undergoing liquid-liquid phase separation upon binding to maternal mRNAs. Binds to the 3'-UTR of maternal mRNAs, inhibiting their translation. The chain is ZAR1-like protein (ZAR1L) from Bos taurus (Bovine).